A 383-amino-acid polypeptide reads, in one-letter code: Sterol 24-C-methyltransferase ERG6 (383 aa).

Residue S2 is modified to N-acetylserine. S99 is modified (phosphoserine).

This sequence belongs to the class I-like SAM-binding methyltransferase superfamily. Erg6/SMT family. Interacts with ERG28.

Its subcellular location is the microsome. The protein localises to the mitochondrion. It catalyses the reaction zymosterol + S-adenosyl-L-methionine = fecosterol + S-adenosyl-L-homocysteine + H(+). It participates in steroid metabolism; ergosterol biosynthesis; ergosterol from zymosterol: step 1/5. In terms of biological role, sterol 24-C-methyltransferase; part of the third module of ergosterol biosynthesis pathway that includes the late steps of the pathway. ERG6 catalyzes the methyl transfer from S-adenosyl-methionine to the C-24 of zymosterol to form fecosterol. The third module or late pathway involves the ergosterol synthesis itself through consecutive reactions that mainly occur in the endoplasmic reticulum (ER) membrane. Firstly, the squalene synthase ERG9 catalyzes the condensation of 2 farnesyl pyrophosphate moieties to form squalene, which is the precursor of all steroids. Squalene synthase is crucial for balancing the incorporation of farnesyl diphosphate (FPP) into sterol and nonsterol isoprene synthesis. Secondly, the squalene epoxidase ERG1 catalyzes the stereospecific oxidation of squalene to (S)-2,3-epoxysqualene, which is considered to be a rate-limiting enzyme in steroid biosynthesis. Then, the lanosterol synthase ERG7 catalyzes the cyclization of (S)-2,3 oxidosqualene to lanosterol, a reaction that forms the sterol core. In the next steps, lanosterol is transformed to zymosterol through a complex process involving various demethylation, reduction and desaturation reactions. The lanosterol 14-alpha-demethylase ERG11 (also known as CYP51) catalyzes C14-demethylation of lanosterol to produce 4,4'-dimethyl cholesta-8,14,24-triene-3-beta-ol, which is critical for ergosterol biosynthesis. The C-14 reductase ERG24 reduces the C14=C15 double bond of 4,4-dimethyl-cholesta-8,14,24-trienol to produce 4,4-dimethyl-cholesta-8,24-dienol. 4,4-dimethyl-cholesta-8,24-dienol is substrate of the C-4 demethylation complex ERG25-ERG26-ERG27 in which ERG25 catalyzes the three-step monooxygenation required for the demethylation of 4,4-dimethyl and 4alpha-methylsterols, ERG26 catalyzes the oxidative decarboxylation that results in a reduction of the 3-beta-hydroxy group at the C-3 carbon to an oxo group, and ERG27 is responsible for the reduction of the keto group on the C-3. ERG28 has a role as a scaffold to help anchor ERG25, ERG26 and ERG27 to the endoplasmic reticulum and ERG29 regulates the activity of the iron-containing C4-methylsterol oxidase ERG25. Then, the sterol 24-C-methyltransferase ERG6 catalyzes the methyl transfer from S-adenosyl-methionine to the C-24 of zymosterol to form fecosterol. The C-8 sterol isomerase ERG2 catalyzes the reaction which results in unsaturation at C-7 in the B ring of sterols and thus converts fecosterol to episterol. The sterol-C5-desaturase ERG3 then catalyzes the introduction of a C-5 double bond in the B ring to produce 5-dehydroepisterol. The C-22 sterol desaturase ERG5 further converts 5-dehydroepisterol into ergosta-5,7,22,24(28)-tetraen-3beta-ol by forming the C-22(23) double bond in the sterol side chain. Finally, ergosta-5,7,22,24(28)-tetraen-3beta-ol is substrate of the C-24(28) sterol reductase ERG4 to produce ergosterol. This is Sterol 24-C-methyltransferase ERG6 from Saccharomyces cerevisiae (strain ATCC 204508 / S288c) (Baker's yeast).